A 307-amino-acid polypeptide reads, in one-letter code: Methionyl-tRNA formyltransferase (307 aa).

108 to 111 contacts (6S)-5,6,7,8-tetrahydrofolate; it reads SLLP.

It belongs to the Fmt family.

It catalyses the reaction L-methionyl-tRNA(fMet) + (6R)-10-formyltetrahydrofolate = N-formyl-L-methionyl-tRNA(fMet) + (6S)-5,6,7,8-tetrahydrofolate + H(+). Its function is as follows. Attaches a formyl group to the free amino group of methionyl-tRNA(fMet). The formyl group appears to play a dual role in the initiator identity of N-formylmethionyl-tRNA by promoting its recognition by IF2 and preventing the misappropriation of this tRNA by the elongation apparatus. In Xylella fastidiosa (strain 9a5c), this protein is Methionyl-tRNA formyltransferase.